The sequence spans 731 residues: Fatty acid oxidation complex subunit alpha (731 aa).

Positions 15–204 are enoyl-CoA hydratase; sequence TEKTSAFSLT…RQGLVDEAVP (190 aa). Residues 320–729 are 3-hydroxyacyl-CoA dehydrogenase; sequence KPIHRVGILG…FYPPADKDNS (410 aa).

This sequence in the N-terminal section; belongs to the enoyl-CoA hydratase/isomerase family. It in the central section; belongs to the 3-hydroxyacyl-CoA dehydrogenase family. In terms of assembly, heterotetramer of two alpha chains (FadJ) and two beta chains (FadI).

The protein localises to the cytoplasm. It catalyses the reaction a (3S)-3-hydroxyacyl-CoA = a (2E)-enoyl-CoA + H2O. The enzyme catalyses a 4-saturated-(3S)-3-hydroxyacyl-CoA = a (3E)-enoyl-CoA + H2O. The catalysed reaction is a (3S)-3-hydroxyacyl-CoA + NAD(+) = a 3-oxoacyl-CoA + NADH + H(+). It carries out the reaction (3S)-3-hydroxybutanoyl-CoA = (3R)-3-hydroxybutanoyl-CoA. The protein operates within lipid metabolism; fatty acid beta-oxidation. Functionally, catalyzes the formation of a hydroxyacyl-CoA by addition of water on enoyl-CoA. Also exhibits 3-hydroxyacyl-CoA epimerase and 3-hydroxyacyl-CoA dehydrogenase activities. The sequence is that of Fatty acid oxidation complex subunit alpha from Pectobacterium atrosepticum (strain SCRI 1043 / ATCC BAA-672) (Erwinia carotovora subsp. atroseptica).